The following is a 350-amino-acid chain: tRNA uridine(34) hydroxylase (350 aa).

A Rhodanese domain is found at 146 to 240; it reads DDPDALFIDM…YARKAREQGL (95 aa). Catalysis depends on C200, which acts as the Cysteine persulfide intermediate.

It belongs to the TrhO family.

The catalysed reaction is uridine(34) in tRNA + AH2 + O2 = 5-hydroxyuridine(34) in tRNA + A + H2O. In terms of biological role, catalyzes oxygen-dependent 5-hydroxyuridine (ho5U) modification at position 34 in tRNAs. This is tRNA uridine(34) hydroxylase from Escherichia fergusonii (strain ATCC 35469 / DSM 13698 / CCUG 18766 / IAM 14443 / JCM 21226 / LMG 7866 / NBRC 102419 / NCTC 12128 / CDC 0568-73).